The primary structure comprises 71 residues: uncharacterized protein (71 aa).

Positions 52–71 are disordered; that stretch reads KEKFERKEDEKSKPKGVRED.

This is an uncharacterized protein from Archaeoglobus fulgidus (strain ATCC 49558 / DSM 4304 / JCM 9628 / NBRC 100126 / VC-16).